Consider the following 172-residue polypeptide: uncharacterized protein (172 aa).

4 helical membrane passes run 20–40 (LVLITISIIALSTAYIAEYIF), 48–68 (CVYERFPYLMLIKISLTALII), 76–96 (LILILITILSSCILSTYHSFV), and 146–166 (MTEYNLLLNICLLIFLGLILF).

The protein localises to the cell membrane. This is an uncharacterized protein from Rickettsia prowazekii (strain Madrid E).